The following is a 118-amino-acid chain: Large ribosomal subunit protein bL19 (118 aa).

This sequence belongs to the bacterial ribosomal protein bL19 family.

Functionally, this protein is located at the 30S-50S ribosomal subunit interface and may play a role in the structure and function of the aminoacyl-tRNA binding site. This is Large ribosomal subunit protein bL19 from Campylobacter jejuni subsp. jejuni serotype O:2 (strain ATCC 700819 / NCTC 11168).